Here is a 90-residue protein sequence, read N- to C-terminus: Molybdopterin synthase sulfur carrier subunit (90 aa).

A 1-thioglycine; alternate modification is found at Gly-90. Gly-90 carries the glycyl adenylate; alternate modification.

The protein belongs to the MoaD family. MOCS2A subfamily. As to quaternary structure, heterotetramer; composed of 2 small (Mocs2A) and 2 large (Mocs2B) subunits. In terms of processing, C-terminal thiocarboxylation occurs in 2 steps, it is first acyl-adenylated (-COAMP) via the hesA/moeB/thiF part of MOCS3, then thiocarboxylated (-COSH) via the rhodanese domain of MOCS3.

Its subcellular location is the cytoplasm. It participates in cofactor biosynthesis; molybdopterin biosynthesis. Functionally, acts as a sulfur carrier required for molybdopterin biosynthesis. Component of the molybdopterin synthase complex that catalyzes the conversion of precursor Z into molybdopterin by mediating the incorporation of 2 sulfur atoms into precursor Z to generate a dithiolene group. In the complex, serves as sulfur donor by being thiocarboxylated (-COSH) at its C-terminus by MOCS3. After interaction with Mocs2B, the sulfur is then transferred to precursor Z to form molybdopterin. This is Molybdopterin synthase sulfur carrier subunit from Drosophila yakuba (Fruit fly).